Reading from the N-terminus, the 207-residue chain is Superoxide dismutase [Mn] (207 aa).

Mn(2+)-binding residues include histidine 28, histidine 76, aspartate 160, and histidine 164.

It belongs to the iron/manganese superoxide dismutase family. Mn(2+) is required as a cofactor.

The enzyme catalyses 2 superoxide + 2 H(+) = H2O2 + O2. Destroys superoxide anion radicals which are normally produced within the cells and which are toxic to biological systems. In Mycobacterium avium, this protein is Superoxide dismutase [Mn] (sodA).